Consider the following 169-residue polypeptide: Shikimate kinase (169 aa).

Residue 12-17 coordinates ATP; sequence GCGKST. Ser16 is a Mg(2+) binding site. Residues Asp34, Arg57, and Gly79 each coordinate substrate. Residue Arg116 coordinates ATP. Arg133 contacts substrate.

Belongs to the shikimate kinase family. Monomer. It depends on Mg(2+) as a cofactor.

The protein resides in the cytoplasm. The enzyme catalyses shikimate + ATP = 3-phosphoshikimate + ADP + H(+). Its pathway is metabolic intermediate biosynthesis; chorismate biosynthesis; chorismate from D-erythrose 4-phosphate and phosphoenolpyruvate: step 5/7. Its function is as follows. Catalyzes the specific phosphorylation of the 3-hydroxyl group of shikimic acid using ATP as a cosubstrate. In Clostridium beijerinckii (strain ATCC 51743 / NCIMB 8052) (Clostridium acetobutylicum), this protein is Shikimate kinase.